The primary structure comprises 190 residues: ADP-ribosylation factor-like protein 6 (190 aa).

The N-myristoyl glycine moiety is linked to residue Gly-2. GTP is bound by residues 24 to 31 (GLDNSGKT), 69 to 73 (DMAGQ), and 130 to 133 (NKMD).

It belongs to the small GTPase superfamily. Arf family. In terms of tissue distribution, specifically expressed in ciliated cells.

It localises to the cytoplasm. This is ADP-ribosylation factor-like protein 6 from Caenorhabditis elegans.